Reading from the N-terminus, the 281-residue chain is Pantothenate synthetase (281 aa).

Residue M30–H37 participates in ATP binding. H37 acts as the Proton donor in catalysis. Q61 is a binding site for (R)-pantoate. Beta-alanine is bound at residue Q61. Residue G147–D150 coordinates ATP. (R)-pantoate is bound at residue Q153. ATP-binding positions include V176 and M184–R187.

The protein belongs to the pantothenate synthetase family. In terms of assembly, homodimer.

The protein localises to the cytoplasm. It catalyses the reaction (R)-pantoate + beta-alanine + ATP = (R)-pantothenate + AMP + diphosphate + H(+). Its pathway is cofactor biosynthesis; (R)-pantothenate biosynthesis; (R)-pantothenate from (R)-pantoate and beta-alanine: step 1/1. Catalyzes the condensation of pantoate with beta-alanine in an ATP-dependent reaction via a pantoyl-adenylate intermediate. This chain is Pantothenate synthetase, found in Heliobacterium modesticaldum (strain ATCC 51547 / Ice1).